The chain runs to 112 residues: Urease subunit beta (112 aa).

The protein belongs to the urease beta subunit family. In terms of assembly, heterotrimer of UreA (gamma), UreB (beta) and UreC (alpha) subunits. Three heterotrimers associate to form the active enzyme.

The protein localises to the cytoplasm. It catalyses the reaction urea + 2 H2O + H(+) = hydrogencarbonate + 2 NH4(+). It participates in nitrogen metabolism; urea degradation; CO(2) and NH(3) from urea (urease route): step 1/1. This Thioalkalivibrio sulfidiphilus (strain HL-EbGR7) protein is Urease subunit beta.